Consider the following 1711-residue polypeptide: Serine/threonine-protein kinase MRCK beta (1711 aa).

In terms of domain architecture, Protein kinase spans 76 to 342 (FEIIKVIGRG…IEDFKKHAFF (267 aa)). Residues 82 to 90 (IGRGAFGEV) and lysine 105 each bind ATP. Residue aspartate 200 is the Proton acceptor of the active site. 2 positions are modified to phosphoserine; by autocatalysis: serine 221 and serine 233. Position 239 is a phosphothreonine; by autocatalysis (threonine 239). In terms of domain architecture, AGC-kinase C-terminal spans 343–413 (EGLNWENIRN…TTESCFSDRG (71 aa)). Phosphothreonine is present on threonine 423. 2 coiled-coil regions span residues 431–815 (QRDL…AHWE) and 878–939 (ELQS…FRAD). The interval 461 to 484 (LQESTQTVQSLHGSSRALSNSNRD) is disordered. Positions 463–481 (ESTQTVQSLHGSSRALSNS) are enriched in polar residues. The residue at position 671 (arginine 671) is an Omega-N-methylarginine. Tyrosine 954 bears the Phosphotyrosine mark. The tract at residues 969-1009 (SSASEQETQAPKPEASPSMSVAASEQQEDMARPPQRPSAVP) is disordered. The segment at 1025–1075 (AHQFSIKSFSSPTQCSHCTSLMVGLIRQGYACEVCSFACHVSCKDGAPQVC) adopts a Phorbol-ester/DAG-type zinc-finger fold. The PH domain maps to 1095 to 1214 (GTAYKGHVKV…WVGILEGLQS (120 aa)). Residues 1240 to 1513 (IKAILTAAIV…RPLNSEGTLN (274 aa)) enclose the CNH domain. One can recognise a CRIB domain in the interval 1583-1596 (ISNPTNFNHVAHMG). Residues 1611 to 1711 (AVPPSQEERP…EGLEQPACDT (101 aa)) form a disordered region. Polar residues predominate over residues 1641-1650 (WPSSGGSEPS). Positions 1664 to 1675 (DFDKEPDSDSTK) are enriched in basic and acidic residues. Residues serine 1680, serine 1682, serine 1686, serine 1690, and serine 1693 each carry the phosphoserine modification.

Belongs to the protein kinase superfamily. AGC Ser/Thr protein kinase family. DMPK subfamily. As to quaternary structure, homodimer and homotetramer via the coiled coil regions. Interacts tightly with GTP-bound but not GDP-bound CDC42. Interacts with TJP1, when in the presence of catalytically active CDC42. Forms a tripartite complex with MYO18A and LURAP1 with the latter acting as an adapter connecting CDC42BPB and MYO18A. LURAP1 binding results in activation of CDC42BPB by abolition of its negative autoregulation. Interacts with STRIP1, STRN3 and SIKE1. Interacts with CPNE4 (via VWFA domain). Interacts with LURAP1. Interacts (via AGC-kinase C-terminal domain) with FAM89B/LRAP25 (via LRR repeat). Forms a tripartite complex with FAM89B/LRAP25 and LIMK1. Requires Mg(2+) as cofactor. In terms of processing, proteolytically cleaved by caspases upon apoptosis induction. As to expression, expressed in all tissues examined, with high levels in heart, brain, placenta and lung.

Its subcellular location is the cytoplasm. It localises to the cell membrane. It is found in the cell junction. The protein resides in the cell projection. The protein localises to the lamellipodium. The catalysed reaction is L-seryl-[protein] + ATP = O-phospho-L-seryl-[protein] + ADP + H(+). It carries out the reaction L-threonyl-[protein] + ATP = O-phospho-L-threonyl-[protein] + ADP + H(+). Maintained in an inactive, closed conformation by an interaction between the kinase domain and the negative autoregulatory C-terminal coiled-coil region. Agonist binding to the phorbol ester binding site disrupts this, releasing the kinase domain to allow N-terminus-mediated dimerization and kinase activation by transautophosphorylation. Inhibited by chelerythrine chloride. In terms of biological role, serine/threonine-protein kinase which is an important downstream effector of CDC42 and plays a role in the regulation of cytoskeleton reorganization and cell migration. Regulates actin cytoskeletal reorganization via phosphorylation of PPP1R12C and MYL9/MLC2. In concert with MYO18A and LURAP1, is involved in modulating lamellar actomyosin retrograde flow that is crucial to cell protrusion and migration. Phosphorylates PPP1R12A. In concert with FAM89B/LRAP25 mediates the targeting of LIMK1 to the lamellipodium resulting in its activation and subsequent phosphorylation of CFL1 which is important for lamellipodial F-actin regulation. This chain is Serine/threonine-protein kinase MRCK beta, found in Homo sapiens (Human).